The primary structure comprises 293 residues: Transcription elongation factor S-II (293 aa).

The TFIIS N-terminal domain occupies 4–81 (ADIRSAKAAL…KKWKADVSKG (78 aa)). A disordered region spans residues 81-123 (GRPLKTTTTTSSTPSKHADVGSQAQKQVQKQSSSGQRTFKSDN). Residues 100 to 116 (VGSQAQKQVQKQSSSGQ) are compositionally biased toward low complexity. In terms of domain architecture, TFIIS central spans 133–248 (IRNNCIGLMY…HAQGAKPQKA (116 aa)). A TFIIS-type zinc finger spans residues 251–291 (DLFTCGKCKQKKVSYYQMQTRSADEPMTTFCECTVCGNRWK). Residues Cys255, Cys258, Cys283, and Cys286 each coordinate Zn(2+).

The protein belongs to the TFS-II family.

The protein localises to the nucleus. Its function is as follows. Necessary for efficient RNA polymerase II transcription elongation past template-encoded arresting sites. The arresting sites in DNA have the property of trapping a certain fraction of elongating RNA polymerases that pass through, resulting in locked ternary complexes. Cleavage of the nascent transcript by S-II allows the resumption of elongation from the new 3'-terminus. The chain is Transcription elongation factor S-II (tfs1) from Schizosaccharomyces pombe (strain 972 / ATCC 24843) (Fission yeast).